The sequence spans 587 residues: Protein NRT1/ PTR FAMILY 2.9 (587 aa).

12 consecutive transmembrane segments (helical) span residues 35 to 55, 65 to 85, 94 to 114, 135 to 155, 181 to 201, 209 to 229, 325 to 345, 368 to 388, 412 to 432, 457 to 477, 493 to 513, and 540 to 560; these read FEKLGIVGSSSNLVIYLTTVF, VVNIYGGTSNFGTIVAAFLCD, LSFAMIACFLGSVAMDLTAVI, IGQIMFLAGAMVLLVIGAGGI, FFNWYFFTFTFAQMVSLTLIV, WSIGLAIPAILMLLGCIIFFA, CVIRVLPVWLSAALFYLAYIQ, IPAGSYTVFLMLGMTIFIPIY, VGAGLFLCITSMMVSAIVEQY, GMWLIPQLVLMGIADALAGVG, FAGSLYYCGIGLASYLSTFLL, and YFYFLVAGMMTLNLAYFLLVS.

The protein belongs to the major facilitator superfamily. Proton-dependent oligopeptide transporter (POT/PTR) (TC 2.A.17) family. In terms of tissue distribution, expressed in roots, stems and major veins of the leaves. Detected in the companion cells of the root phloem.

Its subcellular location is the cell membrane. Functionally, low-affinity nitrate transporter facilitating nitrate loading into root phloem. Not involved in dipeptides transport, but has a weak glucosinolate transport activity. The polypeptide is Protein NRT1/ PTR FAMILY 2.9 (NPF2.9) (Arabidopsis thaliana (Mouse-ear cress)).